A 1366-amino-acid chain; its full sequence is DNA-directed RNA polymerase subunit beta'' (1366 aa).

The Zn(2+) site is built by cysteine 220, cysteine 291, cysteine 298, and cysteine 301.

Belongs to the RNA polymerase beta' chain family. RpoC2 subfamily. In terms of assembly, in plastids the minimal PEP RNA polymerase catalytic core is composed of four subunits: alpha, beta, beta', and beta''. When a (nuclear-encoded) sigma factor is associated with the core the holoenzyme is formed, which can initiate transcription. It depends on Zn(2+) as a cofactor.

The protein localises to the plastid. It is found in the chloroplast. The enzyme catalyses RNA(n) + a ribonucleoside 5'-triphosphate = RNA(n+1) + diphosphate. Its function is as follows. DNA-dependent RNA polymerase catalyzes the transcription of DNA into RNA using the four ribonucleoside triphosphates as substrates. In Phaseolus vulgaris (Kidney bean), this protein is DNA-directed RNA polymerase subunit beta''.